A 397-amino-acid chain; its full sequence is ATP-dependent RNA helicase eIF4A (397 aa).

The short motif at 23 to 51 (YKFDDLNLKPNIVRGIFGYGYETPSAIQQ) is the Q motif element. A Helicase ATP-binding domain is found at 54 to 224 (ILPITEGRDV…TKFMNNPVRI (171 aa)). 67 to 74 (AQSGTGKT) serves as a coordination point for ATP. Positions 172-175 (DEAD) match the DEAD box motif. In terms of domain architecture, Helicase C-terminal spans 235 to 396 (GIKQFYINVE…EMPADIGALF (162 aa)).

The protein belongs to the DEAD box helicase family. eIF4A subfamily. In terms of assembly, component of the eIF4F complex, which composition varies with external and internal environmental conditions. It is composed of at least eIF4A, eIF4E and eIF4G.

The protein resides in the cytoplasm. The catalysed reaction is ATP + H2O = ADP + phosphate + H(+). Its function is as follows. ATP-dependent RNA helicase which is a subunit of the eIF4F complex involved in cap recognition and is required for mRNA binding to ribosome. In the current model of translation initiation, eIF4A unwinds RNA secondary structures in the 5'-UTR of mRNAs which is necessary to allow efficient binding of the small ribosomal subunit, and subsequent scanning for the initiator codon. This Candida albicans (strain SC5314 / ATCC MYA-2876) (Yeast) protein is ATP-dependent RNA helicase eIF4A (TIF1).